An 80-amino-acid polypeptide reads, in one-letter code: Spermatid-specific protein S2 (80 aa).

Over residues 1–36 (VKSRYHQRQYRARKRYAKARRTKKPKRRPKPPRKLR) the composition is skewed to basic residues. The disordered stretch occupies residues 1 to 44 (VKSRYHQRQYRARKRYAKARRTKKPKRRPKPPRKLRYAPSKKQP).

It is found in the nucleus. It localises to the chromosome. In terms of biological role, involved in nuclear basic protein transition: histones are replaced by spermatid specific proteins which are themselves replaced by protamines in late spermatids. In Scyliorhinus canicula (Small-spotted catshark), this protein is Spermatid-specific protein S2.